A 719-amino-acid polypeptide reads, in one-letter code: Homeobox protein SIX5 (719 aa).

Low complexity-rich tracts occupy residues 1 to 22 (MATS…AAAT) and 31 to 65 (QLLQ…GPGS). 2 disordered regions span residues 1-73 (MATS…VTEV) and 241-287 (WFKN…VASM). A DNA-binding region (homeobox) is located at residues 194-253 (GEETVYCFKERSRAALKACYRGNRYPTPDEKRRLATLTGLSLTQVSNWFKNRRQRDRTGT). Residues 272–282 (ESSRSPEDLER) are compositionally biased toward basic and acidic residues.

It belongs to the SIX/Sine oculis homeobox family. Probably binds DNA dimer. Interacts with EYA3, and probably EYA1 and EYA2.

The protein resides in the nucleus. Transcription factor that is thought to be involved in regulation of organogenesis. May be involved in determination and maintenance of retina formation. Binds a 5'-GGTGTCAG-3' motif present in the ARE regulatory element of ATP1A1. Binds a 5'-TCA[AG][AG]TTNC-3' motif present in the MEF3 element in the myogenin promoter, and in the IGFBP5 promoter. Thought to be regulated by association with Dach and Eya proteins, and seems to be coactivated by EYA1, EYA2 and EYA3. The polypeptide is Homeobox protein SIX5 (Six5) (Mus musculus (Mouse)).